The primary structure comprises 124 residues: uncharacterized protein (124 aa).

Transmembrane regions (helical) follow at residues 13 to 33 (LIQIVGVIFALFALSRVVLQL), 43 to 63 (GLFWIFVWGFVVIFLVFPEFF), and 71 to 91 (GVGRGVDALIYISIVVLFYLI).

The protein to M.thermoautotrophicum MTH137.

It is found in the cell membrane. This is an uncharacterized protein from Methanocaldococcus jannaschii (strain ATCC 43067 / DSM 2661 / JAL-1 / JCM 10045 / NBRC 100440) (Methanococcus jannaschii).